Consider the following 401-residue polypeptide: Probable acid ceramidase (401 aa).

Residues 1 to 22 (MKPVAISLSLLLLVTLLPGSEQ) form the signal peptide. 3 N-linked (GlcNAc...) asparagine glycosylation sites follow: N101, N303, and N371.

This sequence belongs to the acid ceramidase family.

The enzyme catalyses an N-acyl-sphingoid base + H2O = a sphingoid base + a fatty acid. It catalyses the reaction an N-acylsphing-4-enine + H2O = sphing-4-enine + a fatty acid. It carries out the reaction an N-acyl-15-methylhexadecasphing-4-enine + H2O = 15-methylhexadecasphing-4-enine + a fatty acid. Functionally, catalyzes the hydrolysis of ceramides into sphingoid base and free fatty acid. C.elegans contain specific sphingoid bases, which are unique or different in structure compared to the sphingoid bases found in other animals. Two examples of these distinctive compounds are: 15-methylhexadecasphinganine and 15-methylhexadecasphing-4-enine. The protein is Probable acid ceramidase of Caenorhabditis elegans.